We begin with the raw amino-acid sequence, 2270 residues long: MDVEEQELLGDYRYRNYSSVIEKALRNFESSSEWADLISSLGKLNKALQTNLKYCLLPRRIIISKRLAQCLHPALPSGVHLKALETYEIIFKIIGTKCLAKDLFLYSSGLFPLLSHAAMSVRPILLGLYETYFIPLQRALLPSLQAFITGLLPGLEEGSEIYERTDQLLQRLSVVVGQNVFYGSLWGSVLVSSSIRLPASLFVVSHINKDLSAQSQSYMLGKDQELAIKSLCASVVDSNVLVQRNTLEILLFFFPFNTCLVPDECSMLLHRSDMVRILAGSIQTVLRRDMSLNRRLFAWLLGSDIKGRHMAPELKDSSGDEEYCNHFFARYSKDLLVEALMQILHQNTLASDTEQGLLVYLKPFRILVSLLDKPEIGPPVVGELFLEVMRAFIAYCRDALGTQMQLSYSQNGAQLISAIKENKNASEIVKTVNLLISSLSSDFLWDYMTICFEDSFRRKDHDTPAGNYLGRAPSITEVCSLLVFLLDVIPLELYSEVQTQYLPQMLSFMAHSLSDNMDVLSLPELTLALKTCFKVLSKVQMPPAFLDMETPSSDTDPLKESENNPAPEVEGEMADDDPVFHPLKSEDSGIGLSASSPELSKHLRMPRVCPDKGDVWKKGGSMQMTLHCFQELVANFASKHLFRIQLKGEGQNSPENGVMTENDMNTKKRGSWQPKQITGPQFKQMLTDFFTPRAPMLKQRSEQSPNKTTNKETEEEWDIERLLQNTGEMKEDCREALAAACHVLLDCATFPVYMSEEETEHLYSVLSQVPGSSDVSFPLWFKTLMMVCCCVKDCYIQNVAISTLLEVINHSQSLSLVLADRMKRSKTPGFGEVFGKLQMVTIPPVSPGVLKLIADKTDFYPRVAHVLWNQLNIETREHHITCVELFYRLHCLAPSANICEEIICQTLLHNDKLTRLEALFRFSVIWHLTREIQGSRVTSHNRSFDRSLFVVLDSLNCSDGAIGAAAQGWLVRALSLNDVARILEAVFLLLLHPKTQRNSIHCIKQKNSSEEFSYWCRKKRTSLKDLAAFRDSPLSSSEENLPQFNTVDRDALWAEVEKDPEKIKNELTEKRPADFRDAPYCVEQEQDYSEHTESADTSTGHNDSDNTSSFTPSSVDLSSDQNYRDNTAGQVTHKNTGQQNMDMPRQNTLLTLVRTESDVTQTSESLSSDDEADLELQAIRSSQLLKQQKEKEEMIEALFKHILLYLQPYDSKRVLYAFTVLEAILKTNPKEFIESVAATSMDTSSTAHLNLIYNLLARHQEALVGQSFYGKLQTQSPLMCPHSLLIELLTYLCLSFLRSYYPCYLKVSHKDVLGNRDVQVKSVEVLIRIMSQLVNIAKSAEGKKVEFIRFLLERCKVQEFVLLSLSASMYTSQKKYELMSAGGNRGIDLGFFEEGIINFGQDQIWSEHPLQIELLKLLQVLIVLEHHLRQLQDDQDTHGDLTKEWQRGINFQQSINAMQYVQAHSITSQGLFVSAVVKALRPDYGYGMHPQWVALVTSSLPFFGKSLGLTVAPFVVQICKNLDELVKQYENESFKISTTSKRENVSPDYPLTLLEGLTMIGHFCLLDHPTQSKKSSSSDPANLKNARNALLEELPRIINTMSLLWSIISKQEREKRPSDLLGTIKASSSVYFKSTKTLKQKILDFLNPLTSHLGVQLIAAVAAVWKKKRFNKSLSKAKILPVPSESQLIFVDLVCALKTLKTDTILHLVKEVVKKPPQIKGDEKSSLVDIPMLQFSYTFIQRLSGSELQENSQSLLALLKESVPLNLAPPGFFLLLSMLNDFVTRTPNLESKKDQKELQEVTQKILEAVGNVAGSSLEQTSWLSRNLEVKAQPQISLDDAEAEEEDLNDDSVVAQSSMVSASAPSMYSVQALSLLAEVLANLLDMVYRSDEKEKAVPLISRLLYYVFPYLRNHSAYNIPSFRAGAQLLSSLSGYAYTKRAWKKEVLDLYMDPGFFQMDTSCVHWKAIIDHFLTHEKTMFKDLMSMPSSSLKLYSSSEQKAMLLKRQGFAVLSGEVDQYHQYLPLIQERLTENIRMGQTPNMAAQMYLFFRVLLLRISPQHLTSLWPIMVTELIHTFVQLQEDLMDEVPTKSSKASKHKTATAEVNGTVYCEIQQSALELYLSACKFLDTALSIPPDKMPLFQLYRWAFVPEVDTEACSVPSEKVENYQECKPHVLRILELLRFRFGEKTTEDPKWKRTEFPLLNLHSICSVTQLTPFFRTLGYAFKAKGETTGESQGSEPTIEYPVEDFTKVLKELEENVESDFLEKLGS.

Disordered stretches follow at residues Met548–Glu572, Leu697–Glu716, and Gln1084–Arg1145. Polar residues predominate over residues Ala1095–Arg1145.

This sequence belongs to the DOP1 family.

The protein resides in the golgi apparatus membrane. In terms of biological role, may be involved in protein traffic between late Golgi and early endosomes. In Xenopus laevis (African clawed frog), this protein is Protein DOP1B (dop1b).